We begin with the raw amino-acid sequence, 263 residues long: uncharacterized protein (263 aa).

It belongs to the flavoredoxin family. It depends on FMN as a cofactor.

This is an uncharacterized protein from Aeropyrum pernix (strain ATCC 700893 / DSM 11879 / JCM 9820 / NBRC 100138 / K1).